The following is a 440-amino-acid chain: 26S proteasome regulatory subunit 4 (440 aa).

A compositionally biased stretch (gly residues) spans Met-1 to Gly-13. Residues Met-1–Leu-49 form a disordered region. Gly-2 carries the N-myristoyl glycine lipid modification. Ser-4 is modified (phosphoserine). Over residues Gly-14 to Glu-26 the composition is skewed to basic and acidic residues. The residue at position 53 (Thr-53) is a Phosphothreonine. The disordered stretch occupies residues Gln-84–Gly-104. Over residues Lys-86 to Arg-103 the composition is skewed to basic and acidic residues. Gly-226 to Thr-233 contributes to the ATP binding site. Lys-237 is covalently cross-linked (Glycyl lysine isopeptide (Lys-Gly) (interchain with G-Cter in ubiquitin)). Lys-258 is modified (N6-acetyllysine). Thr-434 carries the phosphothreonine modification. Position 439 is a phosphotyrosine (Tyr-439).

This sequence belongs to the AAA ATPase family. Component of the 19S proteasome regulatory particle complex. The 26S proteasome consists of a 20S core particle (CP) and two 19S regulatory subunits (RP). The regulatory particle is made of a lid composed of 9 subunits, a base containing 6 ATPases including PSMC1 and few additional components. Interacts with SCA7. Interacts with NGLY1. Interacts with PAAF1.

It localises to the cytoplasm. Its subcellular location is the nucleus. It is found in the membrane. In terms of biological role, component of the 26S proteasome, a multiprotein complex involved in the ATP-dependent degradation of ubiquitinated proteins. This complex plays a key role in the maintenance of protein homeostasis by removing misfolded or damaged proteins, which could impair cellular functions, and by removing proteins whose functions are no longer required. Therefore, the proteasome participates in numerous cellular processes, including cell cycle progression, apoptosis, or DNA damage repair. PSMC1 belongs to the heterohexameric ring of AAA (ATPases associated with diverse cellular activities) proteins that unfolds ubiquitinated target proteins that are concurrently translocated into a proteolytic chamber and degraded into peptides. The chain is 26S proteasome regulatory subunit 4 (PSMC1) from Homo sapiens (Human).